The following is a 1168-amino-acid chain: Myosin IC heavy chain (1168 aa).

Residues 7–666 form the Myosin motor domain; that stretch reads HGVDDMVMLT…SVFSLEELRD (660 aa). ATP is bound at residue 101-108; the sequence is GESGAGKT. The residue at position 311 (Ser-311) is a Phosphoserine. An actin-binding region spans residues 542–564; that stretch reads INILVATLSKCTPHYIRCIKPNE. A TH1 domain is found at 704–892; that stretch reads KERRRLSLER…KVSVAPGLPP (189 aa). 3 disordered regions span residues 876–909, 921–978, and 1036–1168; these read DGKV…GGAS, ILGA…APGP, and AAAP…PPGM. Residues 895–909 show a composition bias toward polar residues; sequence APNIQAPQETSGGAS. Gly residues-rich tracts occupy residues 924-939 and 950-959; these read AKGG…GGPS and PGGGGGGPSP. Residues 960–978 show a composition bias toward low complexity; that stretch reads FGGRPSPSGPPAAASAPGP. The 60-residue stretch at 976–1035 folds into the SH3 domain; sequence PGPEQARALYDFAAENPDELTFNEGAVVTVINKSNPDWWEGELNGQRGVFPASYVELIPR. Positions 1040 to 1052 are enriched in pro residues; it reads APGPSGGPRPAPP. Composition is skewed to gly residues over residues 1063–1083 and 1090–1099; these read GGPG…GRGG and GRAGPPGGRG. The segment covering 1100–1112 has biased composition (low complexity); it reads MPAPGGAAPRGRG. The span at 1120–1141 shows a compositional bias: gly residues; the sequence is GPPGGGRGGAPPPGGMRGRGGP. Over residues 1152 to 1161 the composition is skewed to low complexity; that stretch reads GGMMPPRGRA.

Belongs to the TRAFAC class myosin-kinesin ATPase superfamily. Myosin family. In terms of assembly, myosin I heavy chain is single-headed. Dimer of a heavy and a light chain. Inability to self-assemble into filaments.

Functionally, myosin is a protein that binds to F-actin and has ATPase activity that is activated by F-actin. The polypeptide is Myosin IC heavy chain (MIC) (Acanthamoeba castellanii (Amoeba)).